The primary structure comprises 118 residues: Small ribosomal subunit protein uS13 (118 aa).

The tract at residues 91-118 (HRRGLPVRGQRTKTNARTRKGPRKPIKK) is disordered.

It belongs to the universal ribosomal protein uS13 family. In terms of assembly, part of the 30S ribosomal subunit. Forms a loose heterodimer with protein S19. Forms two bridges to the 50S subunit in the 70S ribosome.

Located at the top of the head of the 30S subunit, it contacts several helices of the 16S rRNA. In the 70S ribosome it contacts the 23S rRNA (bridge B1a) and protein L5 of the 50S subunit (bridge B1b), connecting the 2 subunits; these bridges are implicated in subunit movement. Contacts the tRNAs in the A and P-sites. This Photorhabdus laumondii subsp. laumondii (strain DSM 15139 / CIP 105565 / TT01) (Photorhabdus luminescens subsp. laumondii) protein is Small ribosomal subunit protein uS13.